Here is a 940-residue protein sequence, read N- to C-terminus: Gamma-aminobutyric acid type B receptor subunit 2 (940 aa).

Positions 1 to 40 (MASPPSSGQPRPPPPPPPPARLLLPLLLSLLLSLAPGAWG) are cleaved as a signal peptide. Topologically, residues 41-482 (WARGAPRPPP…LRKISLPLYS (442 aa)) are extracellular. Residue Asn-89 is glycosylated (N-linked (GlcNAc...) asparagine). 3 disulfide bridges follow: Cys-107–Cys-134, Cys-236–Cys-265, and Cys-264–Cys-301. Asn-297, Asn-388, Asn-403, and Asn-452 each carry an N-linked (GlcNAc...) asparagine glycan. The chain crosses the membrane as a helical span at residues 483 to 503 (ILSALTILGMIMASAFLFFNI). Residues 504-521 (KNRNQKLIKMSSPYMNNL) are Cytoplasmic-facing. A helical transmembrane segment spans residues 522–542 (IILGGMLSYASIFLFGLDGSF). Residues 543-550 (VSEKTFET) lie on the Extracellular side of the membrane. Residues 551-571 (LCTVRTWILTVGYTTAFGAMF) traverse the membrane as a helical segment. Residues 572–596 (AKTWRVHAIFKNVKMKKKIIKDQKL) lie on the Cytoplasmic side of the membrane. The chain crosses the membrane as a helical span at residues 597-617 (LVIVGGMLLIDLCILICWQAV). Residues 618 to 653 (DPLRRTVERYSMEPDPAGRDISIRPLLEHCENTHMT) are Extracellular-facing. Residues 654–674 (IWLGIVYAYKGLLMLFGCFLA) form a helical membrane-spanning segment. The Cytoplasmic segment spans residues 675-690 (WETRNVSIPALNDSKY). Residues 691–711 (IGMSVYNVGIMCIIGAAVSFL) form a helical membrane-spanning segment. Residues 712 to 719 (TRDQPNVQ) lie on the Extracellular side of the membrane. Residues 720 to 740 (FCIVALVIIFCSTITLCLVFV) form a helical membrane-spanning segment. Topologically, residues 741–940 (PKLITLRTNP…PSFRVMVSGL (200 aa)) are cytoplasmic. The tract at residues 762–789 (TQNQKKEDSKTSTSVTSVNQASTSRLEG) is disordered. The span at 772 to 786 (TSTSVTSVNQASTSR) shows a compositional bias: polar residues. 2 positions are modified to phosphoserine: Ser-775 and Ser-778. The stretch at 781–818 (QASTSRLEGLQSENHRLRMKITELDKDLEEVTMQLQDT) forms a coiled coil. Residue Thr-818 is modified to Phosphothreonine. 6 positions are modified to phosphoserine: Ser-883, Ser-892, Ser-912, Ser-915, Ser-919, and Ser-923.

The protein belongs to the G-protein coupled receptor 3 family. GABA-B receptor subfamily. Heterodimer of GABBR1 and GABBR2. Homodimers may form, but are inactive. Interacts (via C-terminus) with ATF4 (via leucine zipper domain).

It localises to the cell membrane. The protein localises to the postsynaptic cell membrane. Functionally, component of a heterodimeric G-protein coupled receptor for GABA, formed by GABBR1 and GABBR2. Within the heterodimeric GABA receptor, only GABBR1 seems to bind agonists, while GABBR2 mediates coupling to G proteins. Ligand binding causes a conformation change that triggers signaling via guanine nucleotide-binding proteins (G proteins) and modulates the activity of down-stream effectors, such as adenylate cyclase. Signaling inhibits adenylate cyclase, stimulates phospholipase A2, activates potassium channels, inactivates voltage-dependent calcium-channels and modulates inositol phospholipid hydrolysis. Plays a critical role in the fine-tuning of inhibitory synaptic transmission. Pre-synaptic GABA receptor inhibits neurotransmitter release by down-regulating high-voltage activated calcium channels, whereas postsynaptic GABA receptor decreases neuronal excitability by activating a prominent inwardly rectifying potassium (Kir) conductance that underlies the late inhibitory postsynaptic potentials. Not only implicated in synaptic inhibition but also in hippocampal long-term potentiation, slow wave sleep, muscle relaxation and antinociception. Interacts with KCTD8, KCTD12 and KCTD16; this interaction determines the pharmacology and kinetics of the receptor response, the KCTD proteins markedly accelerating the GABA-B response, although to different extents. The protein is Gamma-aminobutyric acid type B receptor subunit 2 (Gabbr2) of Mus musculus (Mouse).